A 136-amino-acid polypeptide reads, in one-letter code: Histone H2A (136 aa).

Gly residues predominate over residues 1–11; it reads MTGGKSAGGKA. The disordered stretch occupies residues 1 to 23; it reads MTGGKSAGGKAGTTKNAQSRSSK. 2 positions are modified to N6-acetyllysine: lysine 5 and lysine 10. An N5-methylglutamine modification is found at glutamine 107. Residue serine 133 is modified to Phosphoserine. Positions 133-134 match the [ST]-Q motif motif; that stretch reads SQ.

This sequence belongs to the histone H2A family. In terms of assembly, the nucleosome is a histone octamer containing two molecules each of H2A, H2B, H3 and H4 assembled in one H3-H4 heterotetramer and two H2A-H2B heterodimers. The octamer wraps approximately 147 bp of DNA. In terms of processing, phosphorylated to form H2AS128ph (gamma-H2A) in response to DNA double-strand breaks (DSBs) generated by exogenous genotoxic agents and by stalled replication forks. Phosphorylation is dependent on the DNA damage checkpoint kinases MEC1/ATR and TEL1/ATM, spreads on either side of a detected DSB site and may mark the surrounding chromatin for recruitment of proteins required for DNA damage signaling and repair. Gamma-H2A is removed from the DNA prior to the strand invasion-primer extension step of the repair process and subsequently dephosphorylated. Dephosphorylation is necessary for efficient recovery from the DNA damage checkpoint. Post-translationally, acetylated by ESA1 to form H2AK4ac and H2AK7ac.

It localises to the nucleus. It is found in the chromosome. In terms of biological role, core component of nucleosome which plays a central role in DNA double strand break (DSB) repair. Nucleosomes wrap and compact DNA into chromatin, limiting DNA accessibility to the cellular machineries which require DNA as a template. Histones thereby play a central role in transcription regulation, DNA repair, DNA replication and chromosomal stability. DNA accessibility is regulated via a complex set of post-translational modifications of histones, also called histone code, and nucleosome remodeling. This Botryotinia fuckeliana (strain B05.10) (Noble rot fungus) protein is Histone H2A (hta1).